The primary structure comprises 338 residues: Probable O-antigen biosynthesis glycosyltransferase WbiN (338 aa).

The protein belongs to the glycosyltransferase group 1 family. Glycosyltransferase 4 subfamily.

The catalysed reaction is N-acetyl-alpha-D-galactosaminyl-di-trans,octa-cis-undecaprenyl diphosphate + UDP-N-acetyl-alpha-D-galactosamine = alpha-D-GalNAc-(1-&gt;3)-alpha-D-GalNAc-di-trans,octa-cis-undecaprenyl diphosphate + UDP + H(+). The protein operates within bacterial outer membrane biogenesis; LPS O-antigen biosynthesis. In terms of biological role, involved in the assembly of the O-repeating unit during O-antigen biosynthesis. The chain is Probable O-antigen biosynthesis glycosyltransferase WbiN from Escherichia coli.